The sequence spans 248 residues: Granzyme E (248 aa).

The signal sequence occupies residues 1-18; the sequence is MPPVLILLTLLLPLGAGA. The propeptide occupies 19 to 20; the sequence is EE. Residues 21–246 form the Peptidase S1 domain; the sequence is IIGGHVVKPH…FLPWISRNMK (226 aa). Residues Cys50 and Cys66 are joined by a disulfide bond. The active-site Charge relay system is the His65. Asn68 and Asn102 each carry an N-linked (GlcNAc...) asparagine glycan. Catalysis depends on Asp109, which acts as the Charge relay system. 2 cysteine pairs are disulfide-bonded: Cys143-Cys210 and Cys175-Cys189. An N-linked (GlcNAc...) asparagine glycan is attached at Asn154. Ser204 acts as the Charge relay system in catalysis. A glycan (N-linked (GlcNAc...) asparagine) is linked at Asn223.

This sequence belongs to the peptidase S1 family. Granzyme subfamily.

It is found in the cytolytic granule. Functionally, this enzyme is probably necessary for target cell lysis in cell-mediated immune responses. The chain is Granzyme E (Gzme) from Mus musculus (Mouse).